A 123-amino-acid polypeptide reads, in one-letter code: Small ribosomal subunit protein uS12cz/uS12cy (123 aa).

The protein belongs to the universal ribosomal protein uS12 family. Part of the 30S ribosomal subunit.

Its subcellular location is the plastid. The protein resides in the chloroplast. In terms of biological role, with S4 and S5 plays an important role in translational accuracy. Located at the interface of the 30S and 50S subunits. This chain is Small ribosomal subunit protein uS12cz/uS12cy (rps12-A), found in Angiopteris evecta (Mule's foot fern).